The chain runs to 446 residues: Transcription factor SOX-3 (446 aa).

2 disordered regions span residues 29 to 48 and 87 to 140; these read PFPP…TESQ and PVGT…DRVK. Gly residues-rich tracts occupy residues 96–107 and 117–134; these read GTGGPAAPGGAG and ANSG…GGGT. Residues 139–207 constitute a DNA-binding region (HMG box); the sequence is VKRPMNAFMV…VHMKEYPDYK (69 aa). The 9aaTAD motif lies at 399-407; it reads DMISMYLPP.

In terms of assembly, interacts with SOX2 and FGFR1.

It localises to the nucleus. Transcription factor required during the formation of the hypothalamo-pituitary axis. May function as a switch in neuronal development. Keeps neural cells undifferentiated by counteracting the activity of proneural proteins and suppresses neuronal differentiation. Required also within the pharyngeal epithelia for craniofacial morphogenesis. Controls a genetic switch in male development. Is necessary for initiating male sex determination by directing the development of supporting cell precursors (pre-Sertoli cells) as Sertoli rather than granulosa cells. This is Transcription factor SOX-3 (SOX3) from Homo sapiens (Human).